Consider the following 73-residue polypeptide: Protein RALF-like 10 (73 aa).

The signal sequence occupies residues 1–17 (MKALVICLLVIFAAVIA). Cystine bridges form between cysteine 35–cysteine 44 and cysteine 64–cysteine 70.

Belongs to the plant rapid alkalinization factor (RALF) family. Expressed in flowers.

Its subcellular location is the secreted. Its function is as follows. Cell signaling peptide that may regulate plant stress, growth, and development. Mediates a rapid alkalinization of extracellular space by mediating a transient increase in the cytoplasmic Ca(2+) concentration leading to a calcium-dependent signaling events through a cell surface receptor and a concomitant activation of some intracellular mitogen-activated protein kinases. This Arabidopsis thaliana (Mouse-ear cress) protein is Protein RALF-like 10 (RALFL10).